We begin with the raw amino-acid sequence, 475 residues long: Protein arginine N-methyltransferase 2 (475 aa).

The interval 167–194 is disordered; the sequence is EFLSDDDDEEMDVDDDEEDESRDGEETG. The segment covering 169–194 has biased composition (acidic residues); the sequence is LSDDDDEEMDVDDDEEDESRDGEETG. The RMT2 domain occupies 247-475; it reads LAGSQMDYLK…EDFYLPVCTF (229 aa). Residues Tyr254, Met285, 310–315, 331–333, 358–359, and Asp378 each bind S-adenosyl-L-methionine; these read FGLGII, EAH, and WQ.

The protein belongs to the class I-like SAM-binding methyltransferase superfamily. RMT2 methyltransferase family. As to quaternary structure, monomer.

Its subcellular location is the cytoplasm. It is found in the nucleus. In terms of biological role, S-adenosyl-L-methionine-dependent protein-arginine N-methyltransferase that methylates the delta-nitrogen atom of arginine residues to form N5-methylarginine (type IV) in target proteins. Monomethylates ribosomal protein L12. This chain is Protein arginine N-methyltransferase 2, found in Yarrowia lipolytica (strain CLIB 122 / E 150) (Yeast).